Consider the following 189-residue polypeptide: Interferon alpha-F (189 aa).

A signal peptide spans 1–23 (MAPAWSLLLALLLLSCNAICSLG). 2 disulfide bridges follow: cysteine 24-cysteine 122 and cysteine 52-cysteine 162.

This sequence belongs to the alpha/beta interferon family.

It is found in the secreted. Its function is as follows. Produced by macrophages, IFN-alpha have antiviral activities. Interferon stimulates the production of two enzymes: a protein kinase and an oligoadenylate synthetase. The sequence is that of Interferon alpha-F (IFNAF) from Bos taurus (Bovine).